Reading from the N-terminus, the 475-residue chain is Aspartyl/glutamyl-tRNA(Asn/Gln) amidotransferase subunit B (475 aa).

The protein belongs to the GatB/GatE family. GatB subfamily. In terms of assembly, heterotrimer of A, B and C subunits.

The enzyme catalyses L-glutamyl-tRNA(Gln) + L-glutamine + ATP + H2O = L-glutaminyl-tRNA(Gln) + L-glutamate + ADP + phosphate + H(+). It carries out the reaction L-aspartyl-tRNA(Asn) + L-glutamine + ATP + H2O = L-asparaginyl-tRNA(Asn) + L-glutamate + ADP + phosphate + 2 H(+). Functionally, allows the formation of correctly charged Asn-tRNA(Asn) or Gln-tRNA(Gln) through the transamidation of misacylated Asp-tRNA(Asn) or Glu-tRNA(Gln) in organisms which lack either or both of asparaginyl-tRNA or glutaminyl-tRNA synthetases. The reaction takes place in the presence of glutamine and ATP through an activated phospho-Asp-tRNA(Asn) or phospho-Glu-tRNA(Gln). This chain is Aspartyl/glutamyl-tRNA(Asn/Gln) amidotransferase subunit B, found in Mycoplasma mobile (strain ATCC 43663 / 163K / NCTC 11711) (Mesomycoplasma mobile).